The following is a 255-amino-acid chain: Thiazole synthase (255 aa).

Residue K96 is the Schiff-base intermediate with DXP of the active site. 1-deoxy-D-xylulose 5-phosphate is bound by residues G157, 183 to 184 (AG), and 205 to 206 (NT).

The protein belongs to the ThiG family. As to quaternary structure, homotetramer. Forms heterodimers with either ThiH or ThiS.

The protein localises to the cytoplasm. The enzyme catalyses [ThiS sulfur-carrier protein]-C-terminal-Gly-aminoethanethioate + 2-iminoacetate + 1-deoxy-D-xylulose 5-phosphate = [ThiS sulfur-carrier protein]-C-terminal Gly-Gly + 2-[(2R,5Z)-2-carboxy-4-methylthiazol-5(2H)-ylidene]ethyl phosphate + 2 H2O + H(+). It participates in cofactor biosynthesis; thiamine diphosphate biosynthesis. Its function is as follows. Catalyzes the rearrangement of 1-deoxy-D-xylulose 5-phosphate (DXP) to produce the thiazole phosphate moiety of thiamine. Sulfur is provided by the thiocarboxylate moiety of the carrier protein ThiS. In vitro, sulfur can be provided by H(2)S. The polypeptide is Thiazole synthase (Anoxybacillus flavithermus (strain DSM 21510 / WK1)).